The following is a 372-amino-acid chain: Anhydro-N-acetylmuramic acid kinase (372 aa).

ATP is bound at residue 14 to 21 (GTSLDGVD).

This sequence belongs to the anhydro-N-acetylmuramic acid kinase family.

It carries out the reaction 1,6-anhydro-N-acetyl-beta-muramate + ATP + H2O = N-acetyl-D-muramate 6-phosphate + ADP + H(+). Its pathway is amino-sugar metabolism; 1,6-anhydro-N-acetylmuramate degradation. The protein operates within cell wall biogenesis; peptidoglycan recycling. Its function is as follows. Catalyzes the specific phosphorylation of 1,6-anhydro-N-acetylmuramic acid (anhMurNAc) with the simultaneous cleavage of the 1,6-anhydro ring, generating MurNAc-6-P. Is required for the utilization of anhMurNAc either imported from the medium or derived from its own cell wall murein, and thus plays a role in cell wall recycling. The sequence is that of Anhydro-N-acetylmuramic acid kinase from Photorhabdus laumondii subsp. laumondii (strain DSM 15139 / CIP 105565 / TT01) (Photorhabdus luminescens subsp. laumondii).